Reading from the N-terminus, the 114-residue chain is Flagellar hook-basal body complex protein FliE (114 aa).

Belongs to the FliE family.

It is found in the bacterial flagellum basal body. This chain is Flagellar hook-basal body complex protein FliE, found in Burkholderia cenocepacia (strain ATCC BAA-245 / DSM 16553 / LMG 16656 / NCTC 13227 / J2315 / CF5610) (Burkholderia cepacia (strain J2315)).